The chain runs to 156 residues: dCTP deaminase (156 aa).

DCTP-binding positions include 79-84, Asp95, Gln124, and Tyr138; that span reads RSSLAR.

Belongs to the dCTP deaminase family. As to quaternary structure, homotrimer.

It carries out the reaction dCTP + H2O + H(+) = dUTP + NH4(+). It participates in pyrimidine metabolism; dUMP biosynthesis; dUMP from dCTP (dUTP route): step 1/2. Its function is as follows. Catalyzes the deamination of dCTP to dUTP. This chain is dCTP deaminase, found in Pyrococcus horikoshii (strain ATCC 700860 / DSM 12428 / JCM 9974 / NBRC 100139 / OT-3).